The following is a 1336-amino-acid chain: Coiled-coil and C2 domain-containing protein 2A (1336 aa).

Disordered stretches follow at residues 1–29 (MEAALSRKTAKKKRKTHTTRGYRKREQEV) and 70–97 (VEDCQESDEDSGGELAEEPTDSPSQTFI). Positions 8-23 (KTAKKKRKTHTTRGYR) are enriched in basic residues. Positions 70–89 (VEDCQESDEDSGGELAEEPT) are enriched in acidic residues. A coiled-coil region spans residues 136–156 (LSDLSELKDSQIRMLNRYQEQ). The C2 domain occupies 755 to 915 (PREPSGWSGH…LASRTFEGCI (161 aa)).

Probable component of the tectonic-like complex (also named MKS complex), composed of B9d1, B9d2, Cc2d2a, Mks1 and tctn. Expressed in the antennae of chordotonal neurons and male germ cells (at protein level).

It localises to the cytoplasm. It is found in the cytoskeleton. The protein localises to the cilium basal body. Its subcellular location is the microtubule organizing center. The protein resides in the centrosome. It localises to the centriole. In terms of biological role, probable component of the tectonic-like complex (also named MKS complex), a complex localized at the transition zone of primary cilia. Required for ciliary structure and function. The protein is Coiled-coil and C2 domain-containing protein 2A of Drosophila melanogaster (Fruit fly).